A 168-amino-acid chain; its full sequence is Desumoylating isopeptidase 1 (168 aa).

Residues 7–149 (YPVKLYVYDL…FGQALRPLLD (143 aa)) form the PPPDE domain. His-38 is an active-site residue. Residues 83–91 (IFLEYLSSL) carry the Nuclear export signal 1 motif. Cys-108 is a catalytic residue. A Nuclear export signal 2 motif is present at residues 139–153 (PFGQALRPLLDSIQI).

It belongs to the DeSI family. As to quaternary structure, homodimer. Interacts with UBQLN4; leading to the export of UBQLN4 from the nucleus.

It is found in the cytoplasm. The protein resides in the nucleus. It catalyses the reaction S-hexadecanoyl-L-cysteinyl-[protein] + H2O = L-cysteinyl-[protein] + hexadecanoate + H(+). Its activity is regulated as follows. Palmostatin B inhibits its palmitoyl protein thioesterase activity. Functionally, protease which deconjugates SUMO1, SUMO2 and SUMO3 from some substrate proteins. Has isopeptidase but not SUMO-processing activity. Desumoylates ZBTB46. Collaborates with UBQLN4 in the export of ubiquitinated proteins from the nucleus to the cytoplasm. Exhibits palmitoyl protein thioesterase (S-depalmitoylation) activity towards synthetic substrates 4-methylumbelliferyl-6-S-palmitoyl-beta-D-glucopyranoside and S-depalmitoylation probe 5 (DPP-5). The sequence is that of Desumoylating isopeptidase 1 from Homo sapiens (Human).